A 211-amino-acid polypeptide reads, in one-letter code: Large ribosomal subunit protein bL25 (211 aa).

The interval 185 to 211 is disordered; it reads ESTTPAATEGEETEAAAAAPEPAAEDK. Over residues 199–211 the composition is skewed to low complexity; it reads AAAAAPEPAAEDK.

It belongs to the bacterial ribosomal protein bL25 family. CTC subfamily. As to quaternary structure, part of the 50S ribosomal subunit; part of the 5S rRNA/L5/L18/L25 subcomplex. Contacts the 5S rRNA. Binds to the 5S rRNA independently of L5 and L18.

Functionally, this is one of the proteins that binds to the 5S RNA in the ribosome where it forms part of the central protuberance. The polypeptide is Large ribosomal subunit protein bL25 (Treponema denticola (strain ATCC 35405 / DSM 14222 / CIP 103919 / JCM 8153 / KCTC 15104)).